The primary structure comprises 313 residues: Porphobilinogen deaminase (313 aa).

Cys242 is subject to S-(dipyrrolylmethanemethyl)cysteine.

This sequence belongs to the HMBS family. In terms of assembly, monomer. Requires dipyrromethane as cofactor.

It carries out the reaction 4 porphobilinogen + H2O = hydroxymethylbilane + 4 NH4(+). It participates in porphyrin-containing compound metabolism; protoporphyrin-IX biosynthesis; coproporphyrinogen-III from 5-aminolevulinate: step 2/4. Functionally, tetrapolymerization of the monopyrrole PBG into the hydroxymethylbilane pre-uroporphyrinogen in several discrete steps. This Escherichia coli O17:K52:H18 (strain UMN026 / ExPEC) protein is Porphobilinogen deaminase.